The chain runs to 278 residues: 2-dehydro-3-deoxyphosphooctonate aldolase (278 aa).

This sequence belongs to the KdsA family.

The protein resides in the cytoplasm. The enzyme catalyses D-arabinose 5-phosphate + phosphoenolpyruvate + H2O = 3-deoxy-alpha-D-manno-2-octulosonate-8-phosphate + phosphate. It functions in the pathway carbohydrate biosynthesis; 3-deoxy-D-manno-octulosonate biosynthesis; 3-deoxy-D-manno-octulosonate from D-ribulose 5-phosphate: step 2/3. Its pathway is bacterial outer membrane biogenesis; lipopolysaccharide biosynthesis. In Bartonella tribocorum (strain CIP 105476 / IBS 506), this protein is 2-dehydro-3-deoxyphosphooctonate aldolase.